The chain runs to 4513 residues: Dynein-1-beta heavy chain, flagellar inner arm I1 complex (4513 aa).

The stem stretch occupies residues 1-1806 (MEPGDEGKGH…IVKQVLSVFY (1806 aa)). 3 coiled-coil regions span residues 192–223 (KAAA…NQQD), 1544–1577 (TAQG…RQQF), and 1704–1727 (THEC…LKKK). 4 AAA regions span residues 1807 to 2028 (YGYE…PIAR), 2089 to 2350 (RAIE…VPEN), 2458 to 2706 (FKPA…IIQG), and 2808 to 3059 (DYAL…LKRR). Residues 1845 to 1852 (GPAGTGKT), 2127 to 2134 (GRTGSGKS), 2497 to 2504 (GNVGVGKT), and 2848 to 2855 (GVGGSGRK) contribute to the ATP site. 3 coiled-coil regions span residues 3107-3193 (AAMK…LTKK), 3301-3384 (KRAK…SISE), and 3499-3519 (RLKV…NAIQ). The stalk stretch occupies residues 3107-3384 (AAMKKVAEEK…RVRWEASISE (278 aa)). AAA regions lie at residues 3443–3674 (LANP…EVNA) and 3890–4109 (ATTY…LLKS).

As to quaternary structure, the I1 inner arm complex (also known as the f dynein complex) is a two-headed isoform composed of two heavy chains (1-alpha and 1-beta), three intermediate chains and three light chains. I1 occupies a specific position proximal to the first radial spoke and repeats every 96 nm along the length of the axoneme.

Its subcellular location is the cell projection. The protein resides in the cilium. It localises to the flagellum. The protein localises to the cytoplasm. It is found in the cytoskeleton. Its subcellular location is the flagellum axoneme. In terms of biological role, force generating protein of eukaryotic cilia and flagella. Produces force towards the minus ends of microtubules. Dynein has ATPase activity; the force-producing power stroke is thought to occur on release of ADP. Required for assembly of the I1 inner arm complex and its targeting to the appropriate axoneme location. Also required for phototaxis. The polypeptide is Dynein-1-beta heavy chain, flagellar inner arm I1 complex (DHC10) (Chlamydomonas reinhardtii (Chlamydomonas smithii)).